We begin with the raw amino-acid sequence, 513 residues long: Cytochrome P450 1A2 (513 aa).

The O-linked (GlcNAc) serine glycan is linked to Ser-68. A substrate-binding site is contributed by Phe-225. Residue Cys-456 coordinates heme.

It belongs to the cytochrome P450 family. As to quaternary structure, interacts with PGRMC1; the interaction requires PGRMC1 homodimerization. Heme is required as a cofactor.

It is found in the endoplasmic reticulum membrane. The protein localises to the microsome membrane. The enzyme catalyses an organic molecule + reduced [NADPH--hemoprotein reductase] + O2 = an alcohol + oxidized [NADPH--hemoprotein reductase] + H2O + H(+). It catalyses the reaction 17beta-estradiol + reduced [NADPH--hemoprotein reductase] + O2 = 2-hydroxy-17beta-estradiol + oxidized [NADPH--hemoprotein reductase] + H2O + H(+). The catalysed reaction is 17beta-estradiol + reduced [NADPH--hemoprotein reductase] + O2 = 4-hydroxy-17beta-estradiol + oxidized [NADPH--hemoprotein reductase] + H2O + H(+). It carries out the reaction estrone + reduced [NADPH--hemoprotein reductase] + O2 = 2-hydroxyestrone + oxidized [NADPH--hemoprotein reductase] + H2O + H(+). The enzyme catalyses estrone + reduced [NADPH--hemoprotein reductase] + O2 = 4-hydroxyestrone + oxidized [NADPH--hemoprotein reductase] + H2O + H(+). It catalyses the reaction cholesterol + reduced [NADPH--hemoprotein reductase] + O2 = 25-hydroxycholesterol + oxidized [NADPH--hemoprotein reductase] + H2O + H(+). The catalysed reaction is all-trans-retinol + reduced [NADPH--hemoprotein reductase] + O2 = all-trans-retinal + oxidized [NADPH--hemoprotein reductase] + 2 H2O + H(+). It carries out the reaction all-trans-retinal + reduced [NADPH--hemoprotein reductase] + O2 = all-trans-retinoate + oxidized [NADPH--hemoprotein reductase] + H2O + 2 H(+). The enzyme catalyses (5Z,8Z,11Z,14Z)-eicosatetraenoate + reduced [NADPH--hemoprotein reductase] + O2 = (14R,15S)-epoxy-(5Z,8Z,11Z)-eicosatrienoate + oxidized [NADPH--hemoprotein reductase] + H2O + H(+). It catalyses the reaction (5Z,8Z,11Z,14Z)-eicosatetraenoate + reduced [NADPH--hemoprotein reductase] + O2 = (14S,15R)-epoxy-(5Z,8Z,11Z)-eicosatrienoate + oxidized [NADPH--hemoprotein reductase] + H2O + H(+). The catalysed reaction is (5Z,8Z,11Z,14Z,17Z)-eicosapentaenoate + reduced [NADPH--hemoprotein reductase] + O2 = (17R,18S)-epoxy-(5Z,8Z,11Z,14Z)-eicosatetraenoate + oxidized [NADPH--hemoprotein reductase] + H2O + H(+). It carries out the reaction (4Z,7Z,10Z,13Z,16Z,19Z)-docosahexaenoate + reduced [NADPH--hemoprotein reductase] + O2 = (19R,20S)-epoxy-(4Z,7Z,10Z,13Z,16Z)-docosapentaenoate + oxidized [NADPH--hemoprotein reductase] + H2O + H(+). The enzyme catalyses (5S)-hydroperoxy-(6E,8Z,11Z,14Z)-eicosatetraenoate = 5-oxo-(6E,8Z,11Z,14Z)-eicosatetraenoate + H2O. It catalyses the reaction (12S)-hydroperoxy-(5Z,8Z,10E,14Z)-eicosatetraenoate = 12-oxo-(5Z,8Z,10E,14Z)-eicosatetraenoate + H2O. The catalysed reaction is (15S)-hydroperoxy-(5Z,8Z,11Z,13E)-eicosatetraenoate = 15-oxo-(5Z,8Z,11Z,13E)-eicosatetraenoate + H2O. It carries out the reaction (13S)-hydroperoxy-(9Z,11E)-octadecadienoate = 13-oxo-(9Z,11E)-octadecadienoate + H2O. The enzyme catalyses (5Z,8Z,11Z,14Z)-eicosatetraenoate + reduced [NADPH--hemoprotein reductase] + O2 = 13-hydroxy-(5Z,8Z,11Z,14Z)-eicosatetraenoate + oxidized [NADPH--hemoprotein reductase] + H2O + H(+). It catalyses the reaction (5Z,8Z,11Z,14Z)-eicosatetraenoate + reduced [NADPH--hemoprotein reductase] + O2 = 19-hydroxy-(5Z,8Z,11Z,14Z)-eicosatetraenoate + oxidized [NADPH--hemoprotein reductase] + H2O + H(+). The catalysed reaction is (9Z,12Z)-octadecadienoate + reduced [NADPH--hemoprotein reductase] + O2 = 11-hydroxy-(9Z,12Z)-octadecadienoate + oxidized [NADPH--hemoprotein reductase] + H2O + H(+). The protein operates within cofactor metabolism; retinol metabolism. It participates in steroid metabolism; cholesterol metabolism. Its pathway is lipid metabolism; arachidonate metabolism. A cytochrome P450 monooxygenase involved in the metabolism of various endogenous substrates, including fatty acids, steroid hormones and vitamins. Mechanistically, uses molecular oxygen inserting one oxygen atom into a substrate, and reducing the second into a water molecule, with two electrons provided by NADPH via cytochrome P450 reductase (NADPH--hemoprotein reductase). Catalyzes the hydroxylation of carbon-hydrogen bonds. Exhibits high catalytic activity for the formation of hydroxyestrogens from estrone (E1) and 17beta-estradiol (E2), namely 2-hydroxy E1 and E2. Metabolizes cholesterol toward 25-hydroxycholesterol, a physiological regulator of cellular cholesterol homeostasis. May act as a major enzyme for all-trans retinoic acid biosynthesis in the liver. Catalyzes two successive oxidative transformation of all-trans retinol to all-trans retinal and then to the active form all-trans retinoic acid. Primarily catalyzes stereoselective epoxidation of the last double bond of polyunsaturated fatty acids (PUFA), displaying a strong preference for the (R,S) stereoisomer. Catalyzes bisallylic hydroxylation and omega-1 hydroxylation of PUFA. May also participate in eicosanoids metabolism by converting hydroperoxide species into oxo metabolites (lipoxygenase-like reaction, NADPH-independent). Plays a role in the oxidative metabolism of xenobiotics. Catalyzes the N-hydroxylation of heterocyclic amines and the O-deethylation of phenacetin. Metabolizes caffeine via N3-demethylation. The chain is Cytochrome P450 1A2 (Cyp1a2) from Mus musculus (Mouse).